The following is a 1032-amino-acid chain: Toll-like receptor 9 (1032 aa).

The first 25 residues, 1–25, serve as a signal peptide directing secretion; sequence MGPCRGALHPLSLLVQAAALALALA. Residues 26-815 lie on the Extracellular side of the membrane; that stretch reads QGTLPAFLPC…QDLRLCLDEA (790 aa). The cysteines at positions 35 and 45 are disulfide-linked. 47 to 51 lines the DNA pocket; sequence WLFLK. 26 LRR repeats span residues 62–85, 87–110, 122–147, 150–166, 167–190, 198–221, 223–242, 243–268, 283–306, 308–332, 333–356, 363–386, 390–413, 415–440, 472–496, 498–521, 522–545, 547–574, 576–600, 602–624, 629–652, 654–677, 678–701, 703–725, 726–749, and 751–774; these read RGNV…DFVH, VHLR…HFPC, VPTL…SLVS, LSRT…LAGL, YALR…ALQV, LGNL…LPPS, EYLL…DLAN, LTAL…CREC, LSHL…WFHG, GNLM…AFYG, LARL…HLHL, LLSL…TLQS, LPML…IFGA, PGLR…TGEV, CRTL…MFVR, ARLQ…QFVP, LSNL…SFTE, PRLE…SFVA, LPAL…LRSA, LRAL…LYLR, LRSL…NLDN, PKSL…SLAL, LPKL…SLPN, TQLQ…FFAL, AVRL…WFGS, and AGAL…TFVD. N-linked (GlcNAc...) asparagine glycosylation is present at N64. Residues 72-77 and 95-109 contribute to the DNA site; these read SNRIHH and KWNC…MHFP. An intrachain disulfide couples C98 to C110. N129 is a glycosylation site (N-linked (GlcNAc...) asparagine). DNA is bound by residues Y132, R152, and 179-181; that span reads YYK. Residues C178 and C184 are joined by a disulfide bond. A glycan (N-linked (GlcNAc...) asparagine) is linked at N200. Y208 serves as a coordination point for DNA. N210 and N242 each carry an N-linked (GlcNAc...) asparagine glycan. Disulfide bonds link C255–C268 and C258–C265. Residue C258 is the site of S-palmitoyl cysteine attachment. R262 lines the DNA pocket. Residue C265 is the site of S-palmitoyl cysteine attachment. N-linked (GlcNAc...) asparagine glycosylation is present at N340. C472 and C502 form a disulfide bridge. N-linked (GlcNAc...) asparagine glycans are attached at residues N476 and N515. N-linked (GlcNAc...) asparagine glycosylation is present at N569. Residues N671, N696, and N701 are each glycosylated (N-linked (GlcNAc...) asparagine). N733 carries N-linked (GlcNAc...) asparagine glycosylation. Cystine bridges form between C766–C792 and C768–C811. A helical membrane pass occupies residues 816–836; sequence LSWVCFSLSLLAVALSLAVPM. Over 837-1032 the chain is Cytoplasmic; that stretch reads LHQLCGWDLW…QNFCRGPTTA (196 aa). Residues 868–1013 form the TIR domain; the sequence is LAYDAFVVFD…SFWAQLGTAL (146 aa).

It belongs to the Toll-like receptor family. Monomer and homodimer. Exists as a monomer in the absence of unmethylated cytidine-phosphate-guanosine (CpG) ligand. Proteolytic processing of an insertion loop (Z-loop) is required for homodimerization upon binding to the unmethylated CpG ligand leading to its activation. Interacts with MYD88 via their respective TIR domains. Interacts with BTK. Interacts (via transmembrane domain) with UNC93B1. Interacts with CD300LH; the interaction may promote full activation of TLR9-triggered innate responses. Interacts with CNPY3 and HSP90B1; this interaction is required for proper folding in the endoplasmic reticulum. Interacts with SMPDL3B. Interacts with CD82; this interaction is essential for TLR9-dependent myddosome formation in response to CpG stimulation. Post-translationally, activated by proteolytic cleavage of the flexible loop between repeats LRR14 and LRR15 within the ectodomain. Cleavage requires UNC93B1. Proteolytically processed by first removing the majority of the ectodomain by either asparagine endopeptidase (AEP) or a cathepsin followed by a trimming event that is solely cathepsin mediated and required for optimal receptor signaling. Palmitoylated by ZDHHC3 in the Golgi regulates TLR9 trafficking from the Golgi to endosomes. Depalmitoylation by PPT1 controls the release of TLR9 from UNC93B1 in endosomes.

The protein localises to the endoplasmic reticulum membrane. It localises to the endosome. Its subcellular location is the lysosome. It is found in the cytoplasmic vesicle. The protein resides in the phagosome. Functionally, key component of innate and adaptive immunity. TLRs (Toll-like receptors) control host immune response against pathogens through recognition of molecular patterns specific to microorganisms. TLR9 is a nucleotide-sensing TLR which is activated by unmethylated cytidine-phosphate-guanosine (CpG) dinucleotides. Acts via MYD88 and TRAF6, leading to NF-kappa-B activation, cytokine secretion and the inflammatory response. Upon CpG stimulation, induces B-cell proliferation, activation, survival and antibody production. This Canis lupus familiaris (Dog) protein is Toll-like receptor 9 (TLR9).